The sequence spans 319 residues: Coproporphyrin III ferrochelatase 2 (319 aa).

Fe-coproporphyrin III is bound by residues Tyr13, Arg30, 46–47 (RY), Ser54, and Tyr125. The Fe(2+) site is built by His181 and Glu262.

The protein belongs to the ferrochelatase family.

It is found in the cytoplasm. It catalyses the reaction Fe-coproporphyrin III + 2 H(+) = coproporphyrin III + Fe(2+). The protein operates within porphyrin-containing compound metabolism; protoheme biosynthesis. Involved in coproporphyrin-dependent heme b biosynthesis. Catalyzes the insertion of ferrous iron into coproporphyrin III to form Fe-coproporphyrin III. The polypeptide is Coproporphyrin III ferrochelatase 2 (Bacillus cereus (strain ZK / E33L)).